The primary structure comprises 315 residues: GPN-loop GTPase 2 homolog (315 aa).

12–17 (GSGKTV) is a GTP binding site. Positions 69–71 (GPN) match the Gly-Pro-Asn (GPN)-loop; involved in dimer interface motif. 171-174 (SKMD) lines the GTP pocket.

It belongs to the GPN-loop GTPase family. Heterodimers with gpn1 or gpn3. Binds to RNA polymerase II (RNAPII).

In terms of biological role, small GTPase required for proper localization of RNA polymerase II and III (RNAPII and RNAPIII). May act at an RNAP assembly step prior to nuclear import. The polypeptide is GPN-loop GTPase 2 homolog (gpn2) (Dictyostelium discoideum (Social amoeba)).